Consider the following 162-residue polypeptide: uncharacterized protein (162 aa).

It belongs to the A.longa ORF167/ORF288 family.

It localises to the plastid. This is an uncharacterized protein from Euglena longa (Euglenophycean alga).